The chain runs to 133 residues: UPF0146 protein MTH_1000 (133 aa).

The protein belongs to the UPF0146 family.

The chain is UPF0146 protein MTH_1000 from Methanothermobacter thermautotrophicus (strain ATCC 29096 / DSM 1053 / JCM 10044 / NBRC 100330 / Delta H) (Methanobacterium thermoautotrophicum).